Consider the following 269-residue polypeptide: tRNA pseudouridine synthase A (269 aa).

Catalysis depends on D51, which acts as the Nucleophile. Y109 provides a ligand contact to substrate.

It belongs to the tRNA pseudouridine synthase TruA family. In terms of assembly, homodimer.

It carries out the reaction uridine(38/39/40) in tRNA = pseudouridine(38/39/40) in tRNA. Functionally, formation of pseudouridine at positions 38, 39 and 40 in the anticodon stem and loop of transfer RNAs. The polypeptide is tRNA pseudouridine synthase A (Histophilus somni (strain 2336) (Haemophilus somnus)).